Here is a 711-residue protein sequence, read N- to C-terminus: Putative membrane protein IgaA homolog (711 aa).

Position 1 (methionine 1) is a topological domain, periplasmic. The helical transmembrane segment at 2–22 threads the bilayer; it reads STIVIFLAALLACSLLAGWLI. Residues 23–204 are Cytoplasmic-facing; that stretch reads KVRSRRRQLP…YALSRPRGLR (182 aa). Helical transmembrane passes span 205–225 and 226–246; these read EALL…TPDV and FVPW…WGLF. The Cytoplasmic portion of the chain corresponds to 247–339; it reads APPAKSSLRE…KNFPLQHWLR (93 aa). A helical membrane pass occupies residues 340 to 360; that stretch reads STIIAAGSLLVLFMLLFWIPL. Topologically, residues 361–655 are periplasmic; the sequence is DMPLKFTLSW…IPDRSGLWRY (295 aa). Residues 656–676 traverse the membrane as a helical segment; it reads LSTTLLLLTMLGSAIYNGVQA. Over 677–711 the chain is Cytoplasmic; the sequence is WRRYQRHRTRMMKIQAYYESCLNPQLITPSESLIE.

The protein belongs to the IgaA family.

It is found in the cell inner membrane. This chain is Putative membrane protein IgaA homolog (yrfF), found in Escherichia coli O157:H7.